A 147-amino-acid chain; its full sequence is MVHLSAEEKGLVTGLWGKVNVDDVGAEALGRLLVVYPWTQRFFDSFGDLSSAGAIMGNPKVKAHGKKVANSISDGIKNLDNLKGTYAKLSELHCDKLHVDPENFRLLGNVLVCVMARTLGKEFTPHAQAAFQKMVLGVATALAHKYH.

N-acetylvaline is present on Val2. Residues 3–147 form the Globin domain; it reads HLSAEEKGLV…VATALAHKYH (145 aa). Thr13 is subject to Phosphothreonine. Position 45 is a phosphoserine (Ser45). Lys60 carries the post-translational modification N6-acetyllysine. His64 provides a ligand contact to heme b. N6-acetyllysine is present on Lys83. His93 provides a ligand contact to heme b. An S-nitrosocysteine modification is found at Cys94. The residue at position 145 (Lys145) is an N6-acetyllysine.

The protein belongs to the globin family. Heterotetramer of two alpha chains and two beta chains. As to expression, red blood cells.

Its function is as follows. Involved in oxygen transport from the lung to the various peripheral tissues. The protein is Hemoglobin subunit beta (HBB) of Scapanus orarius (Coast mole).